A 92-amino-acid chain; its full sequence is uncharacterized protein (92 aa).

Transmembrane regions (helical) follow at residues 1–21 (MEVL…GVIL), 29–49 (IIML…CYYL), and 51–71 (IAIV…LGYL).

It is found in the cell membrane. This is an uncharacterized protein from Methanocaldococcus jannaschii (strain ATCC 43067 / DSM 2661 / JAL-1 / JCM 10045 / NBRC 100440) (Methanococcus jannaschii).